The chain runs to 268 residues: Ribosomal RNA small subunit methyltransferase A (268 aa).

Positions 18, 20, 45, 66, 91, and 112 each coordinate S-adenosyl-L-methionine.

The protein belongs to the class I-like SAM-binding methyltransferase superfamily. rRNA adenine N(6)-methyltransferase family. RsmA subfamily.

It localises to the cytoplasm. It catalyses the reaction adenosine(1518)/adenosine(1519) in 16S rRNA + 4 S-adenosyl-L-methionine = N(6)-dimethyladenosine(1518)/N(6)-dimethyladenosine(1519) in 16S rRNA + 4 S-adenosyl-L-homocysteine + 4 H(+). In terms of biological role, specifically dimethylates two adjacent adenosines (A1518 and A1519) in the loop of a conserved hairpin near the 3'-end of 16S rRNA in the 30S particle. May play a critical role in biogenesis of 30S subunits. The chain is Ribosomal RNA small subunit methyltransferase A from Shewanella baltica (strain OS185).